The sequence spans 154 residues: MAASRRLMKELEEIRKCGMKNFRNIQVDEANLLTWQGLIVPDNPPYDKGAFRIEINFPAEYPFKPPKITFKTKIYHPNIDEKGQVCLPVISAENWKPATKTDQVIQSLIALVNDPQPEHPLRADLAEEYSKDRKKFCKNAEEFTKKYGEKRPVD.

A UBC core domain is found at 2-149; that stretch reads AASRRLMKEL…AEEFTKKYGE (148 aa). Residue cysteine 86 is the Glycyl thioester intermediate of the active site. N6-acetyllysine is present on lysine 131.

It belongs to the ubiquitin-conjugating enzyme family. In terms of assembly, interacts with PRKN; involved in ubiquitination and degradation of misfolded proteins. Interacts with UBE3A. Interacts with CCNB1IP1, CBL, ZAP70, RNF19A, RNF19B and RNF144B. Interacts with ARIH1. Interacts with ARIH2 (via RING-type 1). Interacts with NCOA1; they functionally interact to regulate progesterone receptor transcriptional activity. Interacts with NDFIP1 (via N-terminus); the interaction mediates recruitment of UBE2L3 to ITCH and causes MAP3K7 ubiquitination. Ubiquitinated. The alteration of UBE2L3 protein levels during the S-phase of the cell cycle is due to ubiquitin-dependent proteasomal degradation. Autoubiquitinated in vitro.

It is found in the nucleus. Its subcellular location is the cytoplasm. It catalyses the reaction S-ubiquitinyl-[E1 ubiquitin-activating enzyme]-L-cysteine + [E2 ubiquitin-conjugating enzyme]-L-cysteine = [E1 ubiquitin-activating enzyme]-L-cysteine + S-ubiquitinyl-[E2 ubiquitin-conjugating enzyme]-L-cysteine.. The protein operates within protein modification; protein ubiquitination. Functionally, ubiquitin-conjugating enzyme E2 that specifically acts with HECT-type and RBR family E3 ubiquitin-protein ligases. Does not function with most RING-containing E3 ubiquitin-protein ligases because it lacks intrinsic E3-independent reactivity with lysine: in contrast, it has activity with the RBR family E3 enzymes, such as PRKN, RNF31 and ARIH1, that function like RING-HECT hybrids. Accepts ubiquitin from the E1 complex and catalyzes its covalent attachment to other proteins. Mediates ubiquitination by the CUL9-RBX1 complex. In vitro catalyzes 'Lys-11'-linked polyubiquitination. Involved in the selective degradation of short-lived and abnormal proteins. Down-regulated during the S-phase it is involved in progression through the cell cycle. Regulates nuclear hormone receptors transcriptional activity. May play a role in myelopoiesis. This is Ubiquitin-conjugating enzyme E2 L3 (UBE2L3) from Bos taurus (Bovine).